Here is a 312-residue protein sequence, read N- to C-terminus: Large ribosomal subunit protein uL10 (312 aa).

A disordered region spans residues 287-312; it reads AAAAPAAKKEEPKEESDDDMGFGLFD.

Belongs to the universal ribosomal protein uL10 family. In terms of assembly, P0 forms a pentameric complex by interaction with dimers of P1 and P2. In terms of processing, phosphorylated.

Its function is as follows. Ribosomal protein P0 is the functional equivalent of E.coli protein L10. This is Large ribosomal subunit protein uL10 from Caenorhabditis elegans.